The following is a 382-amino-acid chain: 8-amino-7-oxononanoate synthase (382 aa).

Substrate-binding residues include Arg-21 and His-131. Pyridoxal 5'-phosphate is bound by residues Ser-178, His-206, and Thr-232. Lys-235 bears the N6-(pyridoxal phosphate)lysine mark. Thr-349 is a substrate binding site.

This sequence belongs to the class-II pyridoxal-phosphate-dependent aminotransferase family. BioF subfamily. In terms of assembly, homodimer. Requires pyridoxal 5'-phosphate as cofactor.

The enzyme catalyses 6-carboxyhexanoyl-[ACP] + L-alanine + H(+) = (8S)-8-amino-7-oxononanoate + holo-[ACP] + CO2. It functions in the pathway cofactor biosynthesis; biotin biosynthesis. Functionally, catalyzes the decarboxylative condensation of pimeloyl-[acyl-carrier protein] and L-alanine to produce 8-amino-7-oxononanoate (AON), [acyl-carrier protein], and carbon dioxide. The chain is 8-amino-7-oxononanoate synthase from Serratia marcescens.